The sequence spans 158 residues: uncharacterized protein (158 aa).

This is an uncharacterized protein from Ureaplasma parvum serovar 3 (strain ATCC 700970).